The sequence spans 152 residues: Lipoprotein signal peptidase (152 aa).

3 helical membrane-spanning segments follow: residues 5–25 (LFVL…FWIV), 61–81 (WFFV…LATH), and 84–104 (LNIW…GNFI). Residues Asp-114 and Asp-130 contribute to the active site. The chain crosses the membrane as a helical span at residues 125–145 (IFNVADSYLTVGVILLVICLW).

It belongs to the peptidase A8 family.

The protein localises to the cell membrane. The catalysed reaction is Release of signal peptides from bacterial membrane prolipoproteins. Hydrolyzes -Xaa-Yaa-Zaa-|-(S,diacylglyceryl)Cys-, in which Xaa is hydrophobic (preferably Leu), and Yaa (Ala or Ser) and Zaa (Gly or Ala) have small, neutral side chains.. The protein operates within protein modification; lipoprotein biosynthesis (signal peptide cleavage). In terms of biological role, this protein specifically catalyzes the removal of signal peptides from prolipoproteins. The protein is Lipoprotein signal peptidase of Streptococcus pyogenes serotype M2 (strain MGAS10270).